Consider the following 417-residue polypeptide: MSQRKRYSLNVVTSPSIPSPTPSAPIRTNESNWEAASPASAASSFLPNVHHGGTVLNPGLGIMRSPSLNKSGAFGRSGSSGSSTVIEPSNIKLLLIGDANVGKTAMILSYCRELLTRAEMSRSVRLRHQQQQQHKDLGLKKTVVNHRLSMKEKRKRYSSNDFEKEFKDINHFADETSDFGNPNIGDDNNHEMADPNEIVIETRSTIGIDIKTNLVNIDNRFFNVILWDTAGQERYQNAIIPSLYKKTNAVILTYDITNAKSFQSCMERWIVQALENFSSQDLLKARFFLVGNKIDLYKERQVTHYDVVQMVQEMQLKHGIKISGNFEVSCKWVNVVERTMNMIILDLVENGCFENNDPCVSITISDDVQGHEQEFHDTVEEPFNFTRQRQHQLEKNNTVDITKPNDDIANNQSICCV.

The interval 1-34 is disordered; sequence MSQRKRYSLNVVTSPSIPSPTPSAPIRTNESNWE. Residues 97–104, 228–232, and 292–295 each bind GTP; these read GDANVGKT, DTAGQ, and NKID. 2 S-geranylgeranyl cysteine lipidation sites follow: C415 and C416.

Belongs to the small GTPase superfamily. Rab family. As to quaternary structure, interacts with MYO2 (via C-terminal tail domain). Interacts with YIF1, YIP3, YIP4 and YIP5.

It localises to the endoplasmic reticulum membrane. It is found in the bud tip. The protein resides in the bud neck. Functionally, involved in the positive control of both endoplasmic reticulum (ER) and mitochondrion inheritance during cell divison. Required for the MYO2-dependent retention of newly inherited mitochondria at the bud tip in developing daughter cells. This chain is GTP-binding protein YPT11 (YPT11), found in Saccharomyces cerevisiae (strain RM11-1a) (Baker's yeast).